The sequence spans 165 residues: Neurotrophin-3 (165 aa).

Positions 1–3 are cleaved as a signal peptide; it reads IQS. A propeptide spanning residues 4–119 is cleaved from the precursor; sequence TSMDQGSLSE…VLTXTSXXXR (116 aa).

It belongs to the NGF-beta family.

It localises to the secreted. Seems to promote the survival of visceral and proprioceptive sensory neurons. The polypeptide is Neurotrophin-3 (NTF3) (Tropidophis haetianus (Haitian dwarf boa)).